The primary structure comprises 362 residues: Chorismate synthase (362 aa).

Arginine 48 and arginine 54 together coordinate NADP(+). FMN contacts are provided by residues 125–127, 237–238, glycine 277, 292–296, and arginine 318; these read RSS, NA, and KPTSS.

It belongs to the chorismate synthase family. As to quaternary structure, homotetramer. It depends on FMNH2 as a cofactor.

It catalyses the reaction 5-O-(1-carboxyvinyl)-3-phosphoshikimate = chorismate + phosphate. The protein operates within metabolic intermediate biosynthesis; chorismate biosynthesis; chorismate from D-erythrose 4-phosphate and phosphoenolpyruvate: step 7/7. Functionally, catalyzes the anti-1,4-elimination of the C-3 phosphate and the C-6 proR hydrogen from 5-enolpyruvylshikimate-3-phosphate (EPSP) to yield chorismate, which is the branch point compound that serves as the starting substrate for the three terminal pathways of aromatic amino acid biosynthesis. This reaction introduces a second double bond into the aromatic ring system. This is Chorismate synthase from Idiomarina loihiensis (strain ATCC BAA-735 / DSM 15497 / L2-TR).